Reading from the N-terminus, the 245-residue chain is 2,3-bisphosphoglycerate-dependent phosphoglycerate mutase (245 aa).

Residues 8-15 (RHGQSLWN), 21-22 (TG), Arg60, 87-90 (ERHY), Lys98, 114-115 (RR), and 183-184 (GN) each bind substrate. The active-site Tele-phosphohistidine intermediate is His9. Residue Glu87 is the Proton donor/acceptor of the active site.

The protein belongs to the phosphoglycerate mutase family. BPG-dependent PGAM subfamily.

It catalyses the reaction (2R)-2-phosphoglycerate = (2R)-3-phosphoglycerate. Its pathway is carbohydrate degradation; glycolysis; pyruvate from D-glyceraldehyde 3-phosphate: step 3/5. Its function is as follows. Catalyzes the interconversion of 2-phosphoglycerate and 3-phosphoglycerate. This Bacillus cereus (strain ATCC 14579 / DSM 31 / CCUG 7414 / JCM 2152 / NBRC 15305 / NCIMB 9373 / NCTC 2599 / NRRL B-3711) protein is 2,3-bisphosphoglycerate-dependent phosphoglycerate mutase.